We begin with the raw amino-acid sequence, 496 residues long: Probable cytosol aminopeptidase (496 aa).

Residues K264 and D269 each coordinate Mn(2+). K276 is a catalytic residue. Residues D287, D346, and E348 each contribute to the Mn(2+) site. R350 is a catalytic residue.

The protein belongs to the peptidase M17 family. The cofactor is Mn(2+).

It is found in the cytoplasm. It catalyses the reaction Release of an N-terminal amino acid, Xaa-|-Yaa-, in which Xaa is preferably Leu, but may be other amino acids including Pro although not Arg or Lys, and Yaa may be Pro. Amino acid amides and methyl esters are also readily hydrolyzed, but rates on arylamides are exceedingly low.. The catalysed reaction is Release of an N-terminal amino acid, preferentially leucine, but not glutamic or aspartic acids.. Its function is as follows. Presumably involved in the processing and regular turnover of intracellular proteins. Catalyzes the removal of unsubstituted N-terminal amino acids from various peptides. The polypeptide is Probable cytosol aminopeptidase (Geobacter sulfurreducens (strain ATCC 51573 / DSM 12127 / PCA)).